A 67-amino-acid chain; its full sequence is Protein Tpau_2998 (67 aa).

This Tsukamurella paurometabola (strain ATCC 8368 / DSM 20162 / CCUG 35730 / CIP 100753 / JCM 10117 / KCTC 9821 / NBRC 16120 / NCIMB 702349 / NCTC 13040) (Corynebacterium paurometabolum) protein is Protein Tpau_2998.